The sequence spans 254 residues: 3-dehydroquinate dehydratase (254 aa).

3-dehydroquinate-binding positions include 47 to 49 (EFR) and Arg83. His144 serves as the catalytic Proton donor/acceptor. Lys171 serves as the catalytic Schiff-base intermediate with substrate. 3-dehydroquinate-binding residues include Arg213, Ser232, and Gln236.

The protein belongs to the type-I 3-dehydroquinase family. In terms of assembly, homodimer.

The enzyme catalyses 3-dehydroquinate = 3-dehydroshikimate + H2O. It participates in metabolic intermediate biosynthesis; chorismate biosynthesis; chorismate from D-erythrose 4-phosphate and phosphoenolpyruvate: step 3/7. Functionally, involved in the third step of the chorismate pathway, which leads to the biosynthesis of aromatic amino acids. Catalyzes the cis-dehydration of 3-dehydroquinate (DHQ) and introduces the first double bond of the aromatic ring to yield 3-dehydroshikimate. The protein is 3-dehydroquinate dehydratase of Neisseria gonorrhoeae (strain ATCC 700825 / FA 1090).